Consider the following 175-residue polypeptide: Protein TWIN SISTER of FT (175 aa).

This sequence belongs to the phosphatidylethanolamine-binding protein family.

The protein resides in the cytoplasm. Its function is as follows. May form complexes with phosphorylated ligands by interfering with kinases and their effectors. The chain is Protein TWIN SISTER of FT (TSF) from Arabidopsis thaliana (Mouse-ear cress).